We begin with the raw amino-acid sequence, 333 residues long: Chitinase-like protein 2 (333 aa).

The N-terminal stretch at Met-1 to Ala-27 is a signal peptide. A disulfide bridge links Cys-50 with Cys-56. N-linked (GlcNAc...) asparagine glycosylation is present at Asn-65. Cys-165 and Cys-175 are disulfide-bonded. 2 N-linked (GlcNAc...) asparagine glycosylation sites follow: Asn-216 and Asn-252. Cysteines 275 and 313 form a disulfide. A disordered region spans residues Pro-307 to Ser-333. The segment covering Ser-320 to Ser-333 has biased composition (low complexity).

Belongs to the glycosyl hydrolase 19 family. As to expression, mostly expressed in stems, especially in xylem and interfascicular fibers.

The protein localises to the secreted. Its function is as follows. No chitinase activity. Required for proper cell wall biosynthesis in etiolated seedlings. Prevents lignin accumulation in hypocotyls. In Arabidopsis thaliana (Mouse-ear cress), this protein is Chitinase-like protein 2 (CTL2).